Reading from the N-terminus, the 283-residue chain is Plasma membrane ascorbate-dependent reductase CYBRD1 (283 aa).

At 1-5 (MEGYK) the chain is on the cytoplasmic side. Residues 6-30 (SFLVFLVSSLLLGFLGVIFTLVWVL) form a helical membrane-spanning segment. The Cytochrome b561 domain maps to 13–218 (SSLLLGFLGV…FGGLVVWMVT (206 aa)). Topologically, residues 31–45 (HWREGLGWDGGAAEF) are extracellular. A helical membrane pass occupies residues 46-67 (NWHPVLVTSGFIFIQGIAIIVY). 3 residues coordinate heme b: His48, Arg68, and Lys77. Residues 68 to 76 (RLPWTWNCS) lie on the Cytoplasmic side of the membrane. The L-ascorbate site is built by Lys77 and Lys81. The chain crosses the membrane as a helical span at residues 77-103 (KLLMKFIHAGLHLTAFVFTIVALVAVF). His84 lines the heme b pocket. Over 104–116 (DFHNAKNIPNMYS) the chain is Extracellular. His106 serves as a coordination point for Fe(3+). Residues 113-116 (NMYS) and His118 contribute to the heme b site. Residues 117-142 (LHSWIGLTVVILYALQLVLGVSIYLL) form a helical membrane-spanning segment. The Cytoplasmic portion of the chain corresponds to 143–149 (PFARDTL). Arg150 is a binding site for L-ascorbate. The chain crosses the membrane as a helical span at residues 150–177 (RAALMPVHVYSGLLIFGTVIATALMGIT). The heme b site is built by His157 and Glu178. Residues 178 to 195 (EKLIFSLKEPPYSKMPPE) lie on the Extracellular side of the membrane. Residues 196–220 (AIFVNTFGLIILVFGGLVVWMVTTP) form a helical membrane-spanning segment. The Cytoplasmic portion of the chain corresponds to 221 to 283 (AWKRPREQEI…LDDAGQRSTM (63 aa)). Residue Lys223 coordinates heme b. Residues 234-263 (NPTVSSPDGTEEGSTITDCSNTEKSDVELN) form a disordered region. A compositionally biased stretch (polar residues) spans 235 to 253 (PTVSSPDGTEEGSTITDCS). The span at 254–263 (NTEKSDVELN) shows a compositional bias: basic and acidic residues.

Homodimer. Heme b serves as cofactor.

The protein resides in the cell membrane. It localises to the apical cell membrane. The enzyme catalyses Fe(3+)(out) + L-ascorbate(in) = monodehydro-L-ascorbate radical(in) + Fe(2+)(out) + H(+). The catalysed reaction is Cu(2+)(out) + L-ascorbate(in) = Cu(+)(out) + monodehydro-L-ascorbate radical(in) + H(+). It catalyses the reaction monodehydro-L-ascorbate radical(out) + L-ascorbate(in) = monodehydro-L-ascorbate radical(in) + L-ascorbate(out). In terms of biological role, plasma membrane reductase that uses cytoplasmic ascorbate as an electron donor to reduce extracellular Fe(3+) into Fe(2+). It is also able to reduce extracellular monodehydro-L-ascorbate and may be involved in extracellular ascorbate regeneration. May also function as a cupric transmembrane reductase. The polypeptide is Plasma membrane ascorbate-dependent reductase CYBRD1 (cybrd1) (Xenopus tropicalis (Western clawed frog)).